The primary structure comprises 56 residues: Protein SspF (56 aa).

Belongs to the alpha/beta-type SASP family.

Its function is as follows. May play some important role in either sporulation or the dormant spore. The sequence is that of Protein SspF (sspF) from Priestia megaterium (strain ATCC 12872 / QMB1551) (Bacillus megaterium).